Here is a 2271-residue protein sequence, read N- to C-terminus: Serine-rich adhesin for platelets (2271 aa).

Residues 1-89 (MSKRQKAFHD…VNMLHDQQAF (89 aa)) form the signal peptide. The interval 90 to 230 (AASDAPLTSE…KTSTTSTSTA (141 aa)) is serine-rich repeat region 1, SRR1. A compositionally biased stretch (polar residues) spans 100–111 (LNTQSETVGNQN). Disordered regions lie at residues 100–229 (LNTQ…STST), 751–791 (NSMS…VVST), and 806–2243 (SVSA…GLLG). Over residues 112 to 128 (STTIEASTSTADSTSVT) the composition is skewed to low complexity. Residues 129–140 (KNSSSVQTSNSD) show a composition bias toward polar residues. The span at 150–229 (VTSTTNSTSN…NKTSTTSTST (80 aa)) shows a compositional bias: low complexity. Residues 231-751 (PVKLRTFSRL…TTFKYEVTRN (521 aa)) form a non-repeat region (NRR) region. Low complexity-rich tracts occupy residues 752 to 791 (SMSD…VVST), 806 to 1392 (SVSA…LSLS), and 1402 to 2214 (SNSA…ATSE). Residues 752–2232 (SMSDSVSTSG…AQSEKRLPDT (1481 aa)) form a serine-rich repeat region 2, SRR2 region. The LPXTG sorting signal motif lies at 2229 to 2233 (LPDTG). Residue threonine 2232 is modified to Pentaglycyl murein peptidoglycan amidated threonine. Residues 2233–2271 (GDSIKQNGLLGGVMTLLVGLGLMKRKKKKDENDQDDSQA) constitute a propeptide, removed by sortase.

The protein belongs to the serine-rich repeat protein (SRRP) family. Proteolytically cleaved by a metalloprotease. Post-translationally, glycosylated. It is probable that most of the Ser residues in SSR1 and SSR2 are O-GlcNAcylated. Sequential glycosylation by sugar transferases are able to generate complex sugar polymorphisms.

The protein localises to the secreted. It is found in the cell wall. Functionally, mediates binding to human platelets, possibly through a receptor-ligand interaction. Probably associated with virulence in endovascular infection. The protein is Serine-rich adhesin for platelets (sraP) of Staphylococcus aureus (strain Mu50 / ATCC 700699).